The sequence spans 337 residues: Glutaredoxin-3 (337 aa).

A2 bears the N-acetylalanine mark. A Thioredoxin domain is found at 2–119 (AAGAAEAGEA…LTKKVQRHVS (118 aa)). Phosphoserine is present on S119. Glutaredoxin domains lie at 144 to 238 (HAAP…PKLE) and 239 to 337 (ERLK…KGEN). [2Fe-2S] cluster is bound by residues C161 and C263.

As to quaternary structure, homodimer; the homodimer is independent of 2Fe-2S clusters. Heterotrimer; forms a heterotrimeric complex composed by two BOLA2 molecules and one GLRX3 molecule; linked by [2Fe-2S] clusters. Interacts (via N-terminus) with PRKCQ/PKC-theta. Interacts (via C-terminus) with CSRP3. Interacts with CSRP2.

It is found in the cytoplasm. The protein resides in the cytosol. Its subcellular location is the cell cortex. It localises to the myofibril. The protein localises to the sarcomere. It is found in the z line. Together with BOLA2, acts as a cytosolic iron-sulfur (Fe-S) cluster assembly factor that facilitates [2Fe-2S] cluster insertion into a subset of cytosolic proteins. Acts as a critical negative regulator of cardiac hypertrophy and a positive inotropic regulator. Required for hemoglobin maturation. Does not possess any thyoredoxin activity since it lacks the conserved motif that is essential for catalytic activity. The sequence is that of Glutaredoxin-3 (Glrx3) from Mus musculus (Mouse).